A 369-amino-acid polypeptide reads, in one-letter code: Trans-enoyl reductase pyiC (369 aa).

An NADP(+)-binding site is contributed by 52–55 (CDYK). 137–144 (TGIGTLGM) contacts substrate. Residues 195-198 (SPKN), tyrosine 213, and 260-261 (LE) each bind NADP(+). Substrate is bound at residue 280–284 (GPLLL). NADP(+) is bound at residue 349–350 (VS).

The protein belongs to the zinc-containing alcohol dehydrogenase family. As to quaternary structure, monomer.

It functions in the pathway mycotoxin biosynthesis. Trans-enoyl reductase; part of the gene cluster that mediates the biosynthesis of the mycotoxin pyrichalasin H, a tyrosine-derived cytochalasan that inhibits the growth of rice seedlings, but also inhibits lymphocyte capping and actin polymerization and alters cell morphology. Pyrichalasin H is indicated as the responsible agent for the genus-specific pathogenicity of M.grisea toward crabgrass. The first step in the pathway is catalyzed by the O-methyltransferase pyiA which methylates free tyrosine to generate the precursor O-methyltyrosine. The hybrid PKS-NRPS pyiS, assisted by the enoyl reductase pyiC, are responsible for fusion of the O-methyltyrosine precursor and the polyketide backbone. The polyketide synthase module (PKS) of pyiS is responsible for the synthesis of the polyketide backbone and the downstream nonribosomal peptide synthetase (NRPS) amidates the carboxyl end of the polyketide with the O-methyltyrosine precursor. As the NRPS A-domain demonstrates substrate tolerance, pyiS can also use phenylalanine, tyrosine and even para-chlorophenylalanine as amino acid precursor, which leads to the production of novel cytochalasans, including halogenated cytochalasans. Because pyiS lacks a designated enoylreductase (ER) domain, the required activity is provided the enoyl reductase pyiC. Reduction by the hydrolyase pyiE, followed by dehydration and intra-molecular Diels-Alder cyclization by the Diels-Alderase pyiF then yield the required isoindolone-fused macrocycle. The tailoring cytochrome P450 monooxygenases piyD and piyG catalyze the hydroxylation at C-18 and C-7, respectivily, whereas the short-chain dehydrogenase/reductase pyiH reduces the carbonyl at C-21 in preparation for the transfer of an acetyl group by the acetyltransferase pyiB. These 3 reactions whose order is not clear yet, lead to the production of O-methylpyrichalasin J, a deacetylated pyrichalasin H. Finally, pyiB to converts O-methylpyrichalasin J into the final product pyrichalasin H via acetylation of C-21. The protein is Trans-enoyl reductase pyiC of Pyricularia grisea (Crabgrass-specific blast fungus).